Consider the following 253-residue polypeptide: 5-oxoprolinase subunit A (253 aa).

It belongs to the LamB/PxpA family. As to quaternary structure, forms a complex composed of PxpA, PxpB and PxpC.

The catalysed reaction is 5-oxo-L-proline + ATP + 2 H2O = L-glutamate + ADP + phosphate + H(+). Catalyzes the cleavage of 5-oxoproline to form L-glutamate coupled to the hydrolysis of ATP to ADP and inorganic phosphate. This is 5-oxoprolinase subunit A from Bacillus cereus (strain ATCC 10987 / NRS 248).